The sequence spans 304 residues: Putative S-adenosyl-L-methionine-dependent methyltransferase MAP_4189c (304 aa).

Residues Asp130 and 159-160 (DL) each bind S-adenosyl-L-methionine.

It belongs to the UPF0677 family.

Functionally, exhibits S-adenosyl-L-methionine-dependent methyltransferase activity. This is Putative S-adenosyl-L-methionine-dependent methyltransferase MAP_4189c from Mycolicibacterium paratuberculosis (strain ATCC BAA-968 / K-10) (Mycobacterium paratuberculosis).